A 380-amino-acid chain; its full sequence is 4-hydroxy-3-methylbut-2-en-1-yl diphosphate synthase (flavodoxin) (380 aa).

Positions 279, 282, 314, and 321 each coordinate [4Fe-4S] cluster.

Belongs to the IspG family. [4Fe-4S] cluster is required as a cofactor.

The enzyme catalyses (2E)-4-hydroxy-3-methylbut-2-enyl diphosphate + oxidized [flavodoxin] + H2O + 2 H(+) = 2-C-methyl-D-erythritol 2,4-cyclic diphosphate + reduced [flavodoxin]. It functions in the pathway isoprenoid biosynthesis; isopentenyl diphosphate biosynthesis via DXP pathway; isopentenyl diphosphate from 1-deoxy-D-xylulose 5-phosphate: step 5/6. Functionally, converts 2C-methyl-D-erythritol 2,4-cyclodiphosphate (ME-2,4cPP) into 1-hydroxy-2-methyl-2-(E)-butenyl 4-diphosphate. The sequence is that of 4-hydroxy-3-methylbut-2-en-1-yl diphosphate synthase (flavodoxin) from Tropheryma whipplei (strain TW08/27) (Whipple's bacillus).